The following is a 446-amino-acid chain: tRNA modification GTPase MnmE (446 aa).

3 residues coordinate (6S)-5-formyl-5,6,7,8-tetrahydrofolate: arginine 24, glutamate 81, and lysine 120. The TrmE-type G domain occupies glycine 216 to leucine 368. Residue asparagine 226 participates in K(+) binding. GTP-binding positions include asparagine 226 to serine 231, threonine 245 to threonine 251, and aspartate 270 to glycine 273. Serine 230 is a Mg(2+) binding site. The K(+) site is built by threonine 245, valine 247, and threonine 250. Position 251 (threonine 251) interacts with Mg(2+). Position 446 (lysine 446) interacts with (6S)-5-formyl-5,6,7,8-tetrahydrofolate.

The protein belongs to the TRAFAC class TrmE-Era-EngA-EngB-Septin-like GTPase superfamily. TrmE GTPase family. As to quaternary structure, homodimer. Heterotetramer of two MnmE and two MnmG subunits. K(+) serves as cofactor.

The protein localises to the cytoplasm. Exhibits a very high intrinsic GTPase hydrolysis rate. Involved in the addition of a carboxymethylaminomethyl (cmnm) group at the wobble position (U34) of certain tRNAs, forming tRNA-cmnm(5)s(2)U34. This Xanthomonas oryzae pv. oryzae (strain PXO99A) protein is tRNA modification GTPase MnmE.